Consider the following 329-residue polypeptide: Acetyl-coenzyme A carboxylase carboxyl transferase subunit alpha (329 aa).

A CoA carboxyltransferase C-terminal domain is found at 40-294 (QLETLAARRR…KNALEKHLSE (255 aa)).

This sequence belongs to the AccA family. As to quaternary structure, acetyl-CoA carboxylase is a heterohexamer composed of biotin carboxyl carrier protein (AccB), biotin carboxylase (AccC) and two subunits each of ACCase subunit alpha (AccA) and ACCase subunit beta (AccD).

Its subcellular location is the cytoplasm. It carries out the reaction N(6)-carboxybiotinyl-L-lysyl-[protein] + acetyl-CoA = N(6)-biotinyl-L-lysyl-[protein] + malonyl-CoA. It functions in the pathway lipid metabolism; malonyl-CoA biosynthesis; malonyl-CoA from acetyl-CoA: step 1/1. Its function is as follows. Component of the acetyl coenzyme A carboxylase (ACC) complex. First, biotin carboxylase catalyzes the carboxylation of biotin on its carrier protein (BCCP) and then the CO(2) group is transferred by the carboxyltransferase to acetyl-CoA to form malonyl-CoA. This Prochlorococcus marinus (strain NATL1A) protein is Acetyl-coenzyme A carboxylase carboxyl transferase subunit alpha.